The following is a 178-amino-acid chain: Twist-related protein (178 aa).

The bHLH domain maps to 20 to 71 (QQRACANRRERQRTKELNDAFTLLRKLIPSMPSDKMSKIHTLRIATDYISFL).

Efficient DNA binding requires dimerization with another bHLH protein. Homodimer. Forms a heterodimer with hlh-2. Expressed in defecation-associated muscles and neuron-like cells in the head at the L1 stage. In later larvae, expressed in SM cells and their descendants. Not expressed in differentiated body wall or sex muscles.

It localises to the nucleus. Acts as a transcriptional regulator. Involved in postembryonic mesodermal cell fate specification. Activates ceh-24 and egl-15 during mesodermal patterning. The polypeptide is Twist-related protein (hlh-8) (Caenorhabditis elegans).